Consider the following 185-residue polypeptide: Ribosome-recycling factor (185 aa).

It belongs to the RRF family.

It localises to the cytoplasm. Responsible for the release of ribosomes from messenger RNA at the termination of protein biosynthesis. May increase the efficiency of translation by recycling ribosomes from one round of translation to another. The chain is Ribosome-recycling factor from Vibrio parahaemolyticus serotype O3:K6 (strain RIMD 2210633).